Consider the following 274-residue polypeptide: Diaminopimelate epimerase (274 aa).

Residues asparagine 11, glutamine 44, and asparagine 64 each contribute to the substrate site. Cysteine 73 functions as the Proton donor in the catalytic mechanism. Residues 74 to 75, asparagine 157, asparagine 190, and 208 to 209 contribute to the substrate site; these read GN and ER. Cysteine 217 functions as the Proton acceptor in the catalytic mechanism. 218 to 219 contributes to the substrate binding site; the sequence is GS.

It belongs to the diaminopimelate epimerase family. As to quaternary structure, homodimer.

The protein localises to the cytoplasm. It catalyses the reaction (2S,6S)-2,6-diaminopimelate = meso-2,6-diaminopimelate. Its pathway is amino-acid biosynthesis; L-lysine biosynthesis via DAP pathway; DL-2,6-diaminopimelate from LL-2,6-diaminopimelate: step 1/1. In terms of biological role, catalyzes the stereoinversion of LL-2,6-diaminopimelate (L,L-DAP) to meso-diaminopimelate (meso-DAP), a precursor of L-lysine and an essential component of the bacterial peptidoglycan. This Histophilus somni (strain 2336) (Haemophilus somnus) protein is Diaminopimelate epimerase.